A 257-amino-acid chain; its full sequence is Neurotrophin-3 (257 aa).

An N-terminal signal peptide occupies residues 1–18 (MSILFYMIFLAYLRGIQG). Residues 19–138 (NSMDQRRLPE…VANRTARRKR (120 aa)) constitute a propeptide that is removed on maturation. A disordered region spans residues 61-81 (STLPKAEAPREPERGEPAKSE). Basic and acidic residues predominate over residues 67-79 (EAPREPERGEPAK). N131 is a glycosylation site (N-linked (GlcNAc...) asparagine). 3 disulfides stabilise this stretch: C152/C217, C195/C246, and C205/C248.

It belongs to the NGF-beta family.

It localises to the secreted. Its function is as follows. Seems to promote the survival of visceral and proprioceptive sensory neurons. The sequence is that of Neurotrophin-3 (NTF3) from Sus scrofa (Pig).